The following is a 203-amino-acid chain: Somatotropin (203 aa).

Residues 1 to 17 (MDRVVIVLSVLSVAASS) form the signal peptide. Gln-18 carries the post-translational modification Pyrrolidone carboxylic acid. Zn(2+) is bound at residue His-35. A disulfide bond links Cys-68 and Cys-176. Glu-185 serves as a coordination point for Zn(2+). An intrachain disulfide couples Cys-193 to Cys-201.

This sequence belongs to the somatotropin/prolactin family.

The protein resides in the secreted. Growth hormone plays an important role in growth control and is involved in the regulation of several anabolic processes. Implicated as an osmoregulatory substance important for seawater adaptation. This Solea senegalensis (Senegalese sole) protein is Somatotropin (gh).